A 410-amino-acid polypeptide reads, in one-letter code: Multifunctional CCA protein (410 aa).

ATP is bound by residues Gly-8 and Arg-11. 2 residues coordinate CTP: Gly-8 and Arg-11. Mg(2+) contacts are provided by Glu-21 and Asp-23. ATP is bound by residues Arg-91, Arg-137, and Arg-140. Residues Arg-91, Arg-137, and Arg-140 each contribute to the CTP site. The HD domain maps to 228–329 (TGIHSLMTLR…VKLLEQVDAF (102 aa)).

It belongs to the tRNA nucleotidyltransferase/poly(A) polymerase family. Bacterial CCA-adding enzyme type 1 subfamily. As to quaternary structure, monomer. Can also form homodimers and oligomers. The cofactor is Mg(2+). It depends on Ni(2+) as a cofactor.

It carries out the reaction a tRNA precursor + 2 CTP + ATP = a tRNA with a 3' CCA end + 3 diphosphate. The enzyme catalyses a tRNA with a 3' CCA end + 2 CTP + ATP = a tRNA with a 3' CCACCA end + 3 diphosphate. Catalyzes the addition and repair of the essential 3'-terminal CCA sequence in tRNAs without using a nucleic acid template. Adds these three nucleotides in the order of C, C, and A to the tRNA nucleotide-73, using CTP and ATP as substrates and producing inorganic pyrophosphate. tRNA 3'-terminal CCA addition is required both for tRNA processing and repair. Also involved in tRNA surveillance by mediating tandem CCA addition to generate a CCACCA at the 3' terminus of unstable tRNAs. While stable tRNAs receive only 3'-terminal CCA, unstable tRNAs are marked with CCACCA and rapidly degraded. The chain is Multifunctional CCA protein from Legionella pneumophila (strain Lens).